A 574-amino-acid polypeptide reads, in one-letter code: uncharacterized protein (574 aa).

Residues 297-327 (STASKSKKRRKDEVSGAQRNSSPLPQDAVSS) form a disordered region. A compositionally biased stretch (polar residues) spans 313-327 (AQRNSSPLPQDAVSS).

This is an uncharacterized protein from Macaca fascicularis (Crab-eating macaque).